Here is a 196-residue protein sequence, read N- to C-terminus: Probable thymidylate kinase (196 aa).

Residue 9-16 (GIDGSGKT) participates in ATP binding.

It belongs to the thymidylate kinase family.

The enzyme catalyses dTMP + ATP = dTDP + ADP. The chain is Probable thymidylate kinase from Methanococcus aeolicus (strain ATCC BAA-1280 / DSM 17508 / OCM 812 / Nankai-3).